The following is a 66-amino-acid chain: Putative membrane protein insertion efficiency factor (66 aa).

It belongs to the UPF0161 family.

Its subcellular location is the cell inner membrane. In terms of biological role, could be involved in insertion of integral membrane proteins into the membrane. In Parasynechococcus marenigrum (strain WH8102), this protein is Putative membrane protein insertion efficiency factor.